Reading from the N-terminus, the 613-residue chain is Zinc metalloproteinase-disintegrin-like MTP8 (613 aa).

The N-terminal stretch at 1 to 20 (MIEVLLVTICFTVFPYQGSP) is a signal peptide. The propeptide occupies 21-191 (IILESGNVND…DETIEKISQL (171 aa)). Residues 205–401 (KYIELYVVVD…VRPQCILNKP (197 aa)) enclose the Peptidase M12B domain. Glu-208 contacts Ca(2+). Asn-282 is a glycosylation site (N-linked (GlcNAc...) asparagine). Asp-292 serves as a coordination point for Ca(2+). 3 disulfide bridges follow: Cys-316–Cys-396, Cys-356–Cys-380, and Cys-358–Cys-363. His-341, His-345, and His-351 together coordinate Zn(2+). Ca(2+) contacts are provided by Cys-396, Asn-399, Asn-414, Phe-416, Glu-418, Glu-421, and Asp-424. One can recognise a Disintegrin domain in the interval 409–495 (PPVCGNYFVE…KCPTDSFQRN (87 aa)). Cystine bridges form between Cys-412/Cys-441, Cys-423/Cys-436, Cys-425/Cys-431, Cys-435/Cys-458, Cys-449/Cys-455, Cys-454/Cys-480, Cys-467/Cys-487, Cys-474/Cys-506, Cys-499/Cys-511, Cys-518/Cys-568, Cys-533/Cys-575, Cys-543/Cys-577, Cys-546/Cys-556, Cys-563/Cys-601, and Cys-595/Cys-606. Asn-437 is a glycosylation site (N-linked (GlcNAc...) asparagine). The D/ECD-tripeptide signature appears at 473–475 (DCD). Asp-475, Leu-476, Glu-478, and Asp-490 together coordinate Ca(2+). 2 N-linked (GlcNAc...) asparagine glycosylation sites follow: Asn-550 and Asn-572.

This sequence belongs to the venom metalloproteinase (M12B) family. P-III subfamily. In terms of assembly, monomer. It depends on Zn(2+) as a cofactor. Expressed by the venom gland.

Its subcellular location is the secreted. Functionally, snake venom zinc metalloproteinase that may impair hemostasis in the prey. This Drysdalia coronoides (White-lipped snake) protein is Zinc metalloproteinase-disintegrin-like MTP8.